Consider the following 401-residue polypeptide: Large ribosomal subunit protein uL4 (401 aa).

The protein belongs to the universal ribosomal protein uL4 family.

This is Large ribosomal subunit protein uL4 (RpL4) from Drosophila melanogaster (Fruit fly).